Reading from the N-terminus, the 482-residue chain is 7-deoxyloganetic acid glucosyl transferase (482 aa).

The Proton acceptor role is filled by His22. Residue His22 coordinates an anthocyanidin. The active-site Charge relay is the Asp127. Thr149, Ala362, Gln364, His379, Trp382, Asn383, Ser384, and Glu387 together coordinate UDP-alpha-D-glucose. Ala402 serves as a coordination point for an anthocyanidin. 2 residues coordinate UDP-alpha-D-glucose: Asp403 and Gln404.

This sequence belongs to the UDP-glycosyltransferase family. As to expression, expressed in the leaf internal phloem-associated parenchyma (IPAP) inside the mesophyll. Mostly observed in leaves, roots and stems, and, to a lower extent, in flowers.

It localises to the nucleus. The protein resides in the cytoplasm. It is found in the cytosol. The enzyme catalyses 7-deoxyloganetate + UDP-alpha-D-glucose = 7-deoxyloganate + UDP + H(+). It functions in the pathway alkaloid biosynthesis. Its function is as follows. Component of the seco-iridoid and derivatives monoterpenoid indole alkaloids (MIAs, e.g. vincristine, quinine, and strychnine) biosynthesis pathway. Catalyzes the glucosylation of 7-deoxyloganetic acid to form 7-deoxyloganic acid using UDP-glucose as the sugar donor. Inactive with loganetic acid, loganetin, iridodial, iridotrial, 8-OH-geraniol, jasmonic acid, gibberellic acid, indole acetic acid, salicylic acid, abscisic acid, zeatin and luteolin. This chain is 7-deoxyloganetic acid glucosyl transferase, found in Catharanthus roseus (Madagascar periwinkle).